Consider the following 367-residue polypeptide: MVRLVLIIFFVYTIILSIGSINCIDNNNLVTNQAALFVFGDSLFDAGNNNYINTVSSFRSNIWPYGQTNFKFPTGRLSDGPEKAWLPSIPPNLQPNNGNNQFTYGVSFASAGAGALAESFLGMVINLGTQLNNFKDVEKSLRSELGDAETKRVFSRAVYLFHIGANDYFYPFSANSSTFKSNSKEKFVDFVIGNITFVIEEVYKMGGRKFGFLNVGPYECSPNSLIRDRTKIGSCFKPVAELIDMHNKKFPDVLRRLQRQLSGFRYALHDYHTSLSERINSPSKYGFKEGKKACCGSGPLRGINTCGNRIGPSQGYGLCENVTDYLFYDSSHLTEKAHRQIAELIWNGPPNVTRPYNLKALFELRLT.

A signal peptide spans 1–23 (MVRLVLIIFFVYTIILSIGSINC). The active-site Nucleophile is serine 42. 3 N-linked (GlcNAc...) asparagine glycosylation sites follow: asparagine 175, asparagine 194, and asparagine 321. Active-site residues include aspartate 329 and histidine 332. N-linked (GlcNAc...) asparagine glycosylation is present at asparagine 351.

The protein belongs to the 'GDSL' lipolytic enzyme family.

The protein resides in the secreted. The polypeptide is GDSL esterase/lipase 3 (GLIP3) (Arabidopsis thaliana (Mouse-ear cress)).